Reading from the N-terminus, the 94-residue chain is Small ribosomal subunit protein bS6 (94 aa).

This sequence belongs to the bacterial ribosomal protein bS6 family.

Functionally, binds together with bS18 to 16S ribosomal RNA. The chain is Small ribosomal subunit protein bS6 from Alkaliphilus oremlandii (strain OhILAs) (Clostridium oremlandii (strain OhILAs)).